Here is a 1010-residue protein sequence, read N- to C-terminus: Glycine--tRNA ligase (1010 aa).

Residues 1-312 (MSEHPLTLQS…TSESVVPMIS (312 aa)) form a glycine--tRNA ligase alpha subunit region. Positions 313–1010 (STEDLLLEIG…SLCHWESVAV (698 aa)) are glycine--tRNA ligase beta subunit.

It belongs to the class-II aminoacyl-tRNA synthetase family.

The protein resides in the cytoplasm. It carries out the reaction tRNA(Gly) + glycine + ATP = glycyl-tRNA(Gly) + AMP + diphosphate. This Chlamydia pneumoniae (Chlamydophila pneumoniae) protein is Glycine--tRNA ligase (glyQS).